Here is a 123-residue protein sequence, read N- to C-terminus: Prismalin-14 (123 aa).

The signal sequence occupies residues M1–A16.

Prismatic layer of shell (at protein level). Expressed primarily in the mantle with highest level in the mantle edge and lower level in the mantle pallium.

Its subcellular location is the secreted. Functionally, may be involved in calcification of the prismatic layer of the shell. This is Prismalin-14 from Margaritifera margaritifera (Freshwater pearl mussel).